The primary structure comprises 289 residues: Type III pantothenate kinase (289 aa).

Residue 9 to 16 participates in ATP binding; sequence DAGNSRVK. Substrate-binding positions include tyrosine 106 and 113–116; that span reads GSDR. Aspartate 115 serves as the catalytic Proton acceptor. Threonine 139 is a binding site for ATP. A substrate-binding site is contributed by threonine 209.

The protein belongs to the type III pantothenate kinase family. As to quaternary structure, homodimer. NH4(+) is required as a cofactor. Requires K(+) as cofactor.

The protein resides in the cytoplasm. The enzyme catalyses (R)-pantothenate + ATP = (R)-4'-phosphopantothenate + ADP + H(+). It participates in cofactor biosynthesis; coenzyme A biosynthesis; CoA from (R)-pantothenate: step 1/5. Its function is as follows. Catalyzes the phosphorylation of pantothenate (Pan), the first step in CoA biosynthesis. This chain is Type III pantothenate kinase, found in Paraburkholderia phymatum (strain DSM 17167 / CIP 108236 / LMG 21445 / STM815) (Burkholderia phymatum).